Here is a 438-residue protein sequence, read N- to C-terminus: Adenylosuccinate synthetase (438 aa).

GTP-binding positions include 13 to 19 (GDEGKGK) and 41 to 43 (GHT). Residue D14 is the Proton acceptor of the active site. Mg(2+)-binding residues include D14 and G41. Residues 14–17 (DEGK), 39–42 (NAGH), T130, R144, Q225, T240, and R310 contribute to the IMP site. H42 (proton donor) is an active-site residue. 306–312 (ATTGRLR) lines the substrate pocket. Residues R312, 338 to 340 (KLD), and 421 to 423 (STG) each bind GTP.

The protein belongs to the adenylosuccinate synthetase family. In terms of assembly, homodimer. It depends on Mg(2+) as a cofactor.

The protein localises to the cytoplasm. It catalyses the reaction IMP + L-aspartate + GTP = N(6)-(1,2-dicarboxyethyl)-AMP + GDP + phosphate + 2 H(+). The protein operates within purine metabolism; AMP biosynthesis via de novo pathway; AMP from IMP: step 1/2. In terms of biological role, plays an important role in the de novo pathway of purine nucleotide biosynthesis. Catalyzes the first committed step in the biosynthesis of AMP from IMP. The polypeptide is Adenylosuccinate synthetase (Aliivibrio fischeri (strain ATCC 700601 / ES114) (Vibrio fischeri)).